The sequence spans 156 residues: MNLNATFFAQMVVFFILWWVVAKFIWPPLVKALDERAKKIADGLAAAEKGKAELELANKRVDQAMAEARTEGAQRVADAEKRAQLTADEIKQNAQAEAARIIAQAKAEAEQQATRAREALRDQVAVLAVKGAEQILKREVNAQVHADLLNQLKAEL.

A helical transmembrane segment spans residues 7–27 (FFAQMVVFFILWWVVAKFIWP).

This sequence belongs to the ATPase B chain family. In terms of assembly, F-type ATPases have 2 components, F(1) - the catalytic core - and F(0) - the membrane proton channel. F(1) has five subunits: alpha(3), beta(3), gamma(1), delta(1), epsilon(1). F(0) has three main subunits: a(1), b(2) and c(10-14). The alpha and beta chains form an alternating ring which encloses part of the gamma chain. F(1) is attached to F(0) by a central stalk formed by the gamma and epsilon chains, while a peripheral stalk is formed by the delta and b chains.

Its subcellular location is the cell inner membrane. Its function is as follows. F(1)F(0) ATP synthase produces ATP from ADP in the presence of a proton or sodium gradient. F-type ATPases consist of two structural domains, F(1) containing the extramembraneous catalytic core and F(0) containing the membrane proton channel, linked together by a central stalk and a peripheral stalk. During catalysis, ATP synthesis in the catalytic domain of F(1) is coupled via a rotary mechanism of the central stalk subunits to proton translocation. Functionally, component of the F(0) channel, it forms part of the peripheral stalk, linking F(1) to F(0). This chain is ATP synthase subunit b, found in Cupriavidus taiwanensis (strain DSM 17343 / BCRC 17206 / CCUG 44338 / CIP 107171 / LMG 19424 / R1) (Ralstonia taiwanensis (strain LMG 19424)).